A 980-amino-acid polypeptide reads, in one-letter code: Thrombospondin-4 (980 aa).

Residues 1–42 (MTMITPSSKLTLTKGNKSWSSTRCGAFLLLHLVLQPWQRAGA) form the signal peptide. The Laminin G-like domain maps to 43–210 (QATPQVFDLL…LEELKLVVRG (168 aa)). The EGF-like 1 domain occupies 304 to 343 (PTRRCDSSPCFRGVRCTDTRDGFQCGPCPDGYTGNGITCS). 21 disulfide bridges follow: cysteine 308-cysteine 319, cysteine 313-cysteine 328, cysteine 331-cysteine 342, cysteine 348-cysteine 359, cysteine 353-cysteine 368, cysteine 371-cysteine 395, cysteine 401-cysteine 412, cysteine 406-cysteine 421, cysteine 424-cysteine 436, cysteine 442-cysteine 456, cysteine 450-cysteine 466, cysteine 468-cysteine 480, cysteine 496-cysteine 501, cysteine 506-cysteine 526, cysteine 542-cysteine 562, cysteine 565-cysteine 585, cysteine 601-cysteine 621, cysteine 624-cysteine 644, cysteine 662-cysteine 682, cysteine 702-cysteine 722, and cysteine 738-cysteine 959. One can recognise an EGF-like 2; calcium-binding domain in the interval 344-381 (DVDECKYHPCYPGVRCTNLAPGFRCDACPVGFTGPMVQ). One can recognise an EGF-like 3; calcium-binding domain in the interval 397 to 434 (DVDECRNGACVLNSICINTLGSYRCGPCKPGYTGDQTR). The EGF-like 4 domain occupies 438–481 (TERSCRNPEQNPCSVHAQCIEERQGDVTCVCGVGWAGRAGYVCG). 8 TSP type-3 repeats span residues 482–514 (KDVDIDSYPDEELPCSARNCKKDNCKYVPNSGQ), 515–550 (EDADRDGIGDACDEDADGDGILNEQDNCVLTHNVDQ), 551–573 (RNTDKDIFGDACDNCRGVLNNDQ), 574–609 (KDTDGDGKGDACDDDMDGDGIKNILDNCPRVPNRDQ), 610–632 (QDRDGDGVGDACDSCPDVSNPNQ), 633–670 (SDVDNDLVGDSCDTNQDSDGDGHQDSTDNCPTVINSAQ), 671–710 (LDTDKDGIGDECDDDDDNDGMPDLFPPGPDNCRLVPNPAQ), and 711–746 (EDSNNDGVGDICEADFDQDKVIDRIDVCPENAEITL). Residues 596-691 (NILDNCPRVP…CDDDDDNDGM (96 aa)) form a disordered region. Positions 605–615 (PNRDQQDRDGD) are enriched in basic and acidic residues. The N-linked (GlcNAc...) asparagine glycan is linked to asparagine 631. Over residues 659 to 671 (TDNCPTVINSAQL) the composition is skewed to polar residues. Residues 679–690 (GDECDDDDDNDG) are compositionally biased toward acidic residues. The TSP C-terminal domain occupies 750 to 964 (RAYQTVVLDP…LKYRCNDTIP (215 aa)). N-linked (GlcNAc...) asparagine glycosylation occurs at asparagine 960.

This sequence belongs to the thrombospondin family. Homopentamer; disulfide-linked. Interacts with PTBP3. Interacts (via EGF-like 3; calcium-binding domain) with ATF6 and facilitates its processing, activation and nuclear translocation. Interacts with NOTCH1. As to expression, mainly expressed in astrocytes, and in ressponse to peripheral nerve injury, significantly up-regulated in the dorsal spinal cord (at protein level).

It is found in the endoplasmic reticulum. The protein resides in the sarcoplasmic reticulum. Its subcellular location is the secreted. It localises to the extracellular space. The protein localises to the extracellular matrix. In terms of biological role, adhesive glycoprotein that mediates cell-to-cell and cell-to-matrix interactions and is involved in various processes including cellular proliferation, migration, adhesion and attachment, inflammatory response to CNS injury, regulation of vascular inflammation and adaptive responses of the heart to pressure overload and in myocardial function and remodeling. Binds to structural extracellular matrix (ECM) proteins and modulates the ECM in response to tissue damage, contributing to cardioprotective and adaptive ECM remodeling. Plays a role in ER stress response, via its interaction with the activating transcription factor 6 alpha (ATF6) which produces adaptive ER stress response factors and protects myocardium from pressure overload. May contribute to spinal presynaptic hypersensitivity and neuropathic pain states after peripheral nerve injury. May play a role in regulating protective astrogenesis from the subventricular zone (SVZ) niche after injury in a NOTCH1-dependent manner. The sequence is that of Thrombospondin-4 (Thbs4) from Rattus norvegicus (Rat).